An 89-amino-acid chain; its full sequence is Small ribosomal subunit protein uS15 (89 aa).

This sequence belongs to the universal ribosomal protein uS15 family. Part of the 30S ribosomal subunit. Forms a bridge to the 50S subunit in the 70S ribosome, contacting the 23S rRNA.

Functionally, one of the primary rRNA binding proteins, it binds directly to 16S rRNA where it helps nucleate assembly of the platform of the 30S subunit by binding and bridging several RNA helices of the 16S rRNA. Its function is as follows. Forms an intersubunit bridge (bridge B4) with the 23S rRNA of the 50S subunit in the ribosome. The sequence is that of Small ribosomal subunit protein uS15 from Chlorobium chlorochromatii (strain CaD3).